The following is a 617-amino-acid chain: Proline--tRNA ligase (617 aa).

Belongs to the class-II aminoacyl-tRNA synthetase family. ProS type 1 subfamily. As to quaternary structure, homodimer.

It is found in the cytoplasm. It carries out the reaction tRNA(Pro) + L-proline + ATP = L-prolyl-tRNA(Pro) + AMP + diphosphate. Its function is as follows. Catalyzes the attachment of proline to tRNA(Pro) in a two-step reaction: proline is first activated by ATP to form Pro-AMP and then transferred to the acceptor end of tRNA(Pro). As ProRS can inadvertently accommodate and process non-cognate amino acids such as alanine and cysteine, to avoid such errors it has two additional distinct editing activities against alanine. One activity is designated as 'pretransfer' editing and involves the tRNA(Pro)-independent hydrolysis of activated Ala-AMP. The other activity is designated 'posttransfer' editing and involves deacylation of mischarged Ala-tRNA(Pro). The misacylated Cys-tRNA(Pro) is not edited by ProRS. In Treponema pallidum (strain Nichols), this protein is Proline--tRNA ligase.